Consider the following 613-residue polypeptide: Ribosome-associated molecular chaperone SSB1 (613 aa).

The segment at 1–391 is nucleotide binding domain (NBD); that stretch reads MAEGVFPGAI…ILTGQSTSDE (391 aa). ATP contacts are provided by residues 16–18, lysine 73, 205–207, 271–278, and glycine 342; these read TTY, GGT, and ERAKRTLS. Residues 392–402 form an inter-domain linker region; sequence TKDLLLLDVAP. The segment at 403–613 is substrate binding domain (SBD); sequence LSLGVGMAGD…RAVTKAMSTR (211 aa). The tract at residues 516-612 is lid domain (SBDalpha); sequence SEEIEQMVNQ…KRAVTKAMST (97 aa). A Nuclear export signal motif is present at residues 574-582; that stretch reads VEAALADAF.

The protein belongs to the heat shock protein 70 family. Ssb-type Hsp70 subfamily. In terms of assembly, binds to ribosomes. Binds close to the ribosomal tunnel exit via contacts with both ribosomal proteins and rRNA. Directly interacts with nascent polypeptides. This interaction is dependent on the ribosome-associated complex (RAC). Interacts with SSE1. Interacts with FES1.

Its subcellular location is the cytoplasm. The enzyme catalyses ATP + H2O = ADP + phosphate + H(+). In terms of biological role, ribosome-bound, Hsp70-type chaperone that assists in the cotranslational folding of newly synthesized proteins in the cytosol. Stimulates folding by interacting with nascent chains, binding to short, largely hydrophobic sequences exposed by unfolded proteins, thereby stabilizing longer, more slowly translated, and aggregation-prone nascent polypeptides and domains that cannot fold stably until fully synthesized. The Hsp70-protein substrate interaction depends on ATP-binding and on allosteric regulation between the NBD and the SBD. The ATP-bound state is characterized by a fast exchange rate of substrate (low affinity state), while in the ADP-bound state exchange is much slower (high affinity state). During the Hsp70 cycle, the chaperone switches between the ATP-bound state (open conformation) and the ADP-bound state (closed conformation) by major conformational rearrangements involving mainly the lid domain. Ssb cooperates with a specific Hsp40/Hsp70 co-chaperone termed the ribosome-associated complex (RAC), which stimulates the ATPase activity of the ribosome-associated pool of Ssbs and switches it to the high affinity substrate binding state. Hsp110 chaperone SSE1 and FES1 act as nucleotide exchange factors that cause substrate release. This chain is Ribosome-associated molecular chaperone SSB1 (SSB1), found in Kluyveromyces marxianus (Yeast).